The following is a 304-amino-acid chain: UDP-3-O-acyl-N-acetylglucosamine deacetylase (304 aa).

3 residues coordinate Zn(2+): His-79, His-238, and Asp-242. His-265 serves as the catalytic Proton donor.

The protein belongs to the LpxC family. Zn(2+) is required as a cofactor.

The enzyme catalyses a UDP-3-O-[(3R)-3-hydroxyacyl]-N-acetyl-alpha-D-glucosamine + H2O = a UDP-3-O-[(3R)-3-hydroxyacyl]-alpha-D-glucosamine + acetate. It functions in the pathway glycolipid biosynthesis; lipid IV(A) biosynthesis; lipid IV(A) from (3R)-3-hydroxytetradecanoyl-[acyl-carrier-protein] and UDP-N-acetyl-alpha-D-glucosamine: step 2/6. Its function is as follows. Catalyzes the hydrolysis of UDP-3-O-myristoyl-N-acetylglucosamine to form UDP-3-O-myristoylglucosamine and acetate, the committed step in lipid A biosynthesis. The chain is UDP-3-O-acyl-N-acetylglucosamine deacetylase from Pseudoalteromonas atlantica (strain T6c / ATCC BAA-1087).